The following is a 284-amino-acid chain: 4-hydroxybenzoate octaprenyltransferase (284 aa).

Transmembrane regions (helical) follow at residues 13–32 (FNRP…ALWL), 90–110 (ALML…FTDL), 112–132 (TILL…MKRY), 134–154 (HLPQ…AYSA), 164–184 (LWML…YYAM), 200–220 (ILFG…TLSL), and 224–244 (IGLL…CVGL).

It belongs to the UbiA prenyltransferase family. Mg(2+) is required as a cofactor.

The protein localises to the cell inner membrane. The catalysed reaction is all-trans-octaprenyl diphosphate + 4-hydroxybenzoate = 4-hydroxy-3-(all-trans-octaprenyl)benzoate + diphosphate. It functions in the pathway cofactor biosynthesis; ubiquinone biosynthesis. Catalyzes the prenylation of para-hydroxybenzoate (PHB) with an all-trans polyprenyl group. Mediates the second step in the final reaction sequence of ubiquinone-8 (UQ-8) biosynthesis, which is the condensation of the polyisoprenoid side chain with PHB, generating the first membrane-bound Q intermediate 3-octaprenyl-4-hydroxybenzoate. The chain is 4-hydroxybenzoate octaprenyltransferase from Marinomonas sp. (strain MWYL1).